The primary structure comprises 260 residues: Putative ATP-binding protein BruAb2_1123 (260 aa).

Residues 5-228 (ISFNNVVMRY…DLPYPRTEAI (224 aa)) form the ABC transporter domain. 37 to 44 (GPSGCGKS) contacts ATP.

Belongs to the ABC transporter superfamily. The complex is composed of two ATP-binding proteins (BruAb2_1123), two transmembrane proteins (BruAb2_1124) and a solute-binding protein (BruAb2_1122).

The protein resides in the cell inner membrane. Probably part of an ABC transporter complex. Probably Responsible for energy coupling to the transport system. The chain is Putative ATP-binding protein BruAb2_1123 from Brucella abortus biovar 1 (strain 9-941).